The chain runs to 688 residues: DNA ligase (688 aa).

NAD(+) contacts are provided by residues 51-55 (DSEYD), 100-101 (SL), and Glu129. The active-site N6-AMP-lysine intermediate is the Lys131. The NAD(+) site is built by Arg152, Glu189, Lys308, and Lys332. Residues Cys426, Cys429, Cys444, and Cys450 each coordinate Zn(2+). The BRCT domain maps to 609–688 (ADEQPLKGQT…DELLALLANS (80 aa)).

This sequence belongs to the NAD-dependent DNA ligase family. LigA subfamily. It depends on Mg(2+) as a cofactor. Mn(2+) serves as cofactor.

The catalysed reaction is NAD(+) + (deoxyribonucleotide)n-3'-hydroxyl + 5'-phospho-(deoxyribonucleotide)m = (deoxyribonucleotide)n+m + AMP + beta-nicotinamide D-nucleotide.. In terms of biological role, DNA ligase that catalyzes the formation of phosphodiester linkages between 5'-phosphoryl and 3'-hydroxyl groups in double-stranded DNA using NAD as a coenzyme and as the energy source for the reaction. It is essential for DNA replication and repair of damaged DNA. In Shewanella sp. (strain MR-7), this protein is DNA ligase.